Consider the following 539-residue polypeptide: Protein pim1 (539 aa).

A disordered region spans residues 1–53; the sequence is MTSNRSTRSSTKREEVSKNGVEKRELDESDVMKNGKKPVKRAKVSSLPKPVRV. Residues 11 to 33 show a composition bias toward basic and acidic residues; sequence TKREEVSKNGVEKRELDESDVMK. Positions 34–43 are enriched in basic residues; it reads NGKKPVKRAK. RCC1 repeat units lie at residues 70–125, 127–191, 192–243, 244–296, 298–353, 354–417, and 419–472; these read RLNV…ALSH, GRVY…AITD, NGCC…ALTT, TGKV…AIDN, GRVY…ALLE, DGRV…AVTS, and GKVY…IAGI. A disordered region spans residues 478–539; sequence EPVANGIKSE…SVLEPSSTTA (62 aa). Over residues 486-504 the composition is skewed to basic and acidic residues; that stretch reads SEPENEKKLKTEETSKTDD. The span at 514 to 525 shows a compositional bias: polar residues; it reads VTSNGEPSTATS.

Oligomer of dis3, pim1 and spi1. Interacts with ned1.

It localises to the nucleus. Functionally, promotes the exchange of Ran(spi1)-bound GDP by GTP. Involved in the control of mitosis. Regulates a variety of nuclear events, including mitotic check-point, chromosome decondensation and mRNA processing/transport. The protein is Protein pim1 (pim1) of Schizosaccharomyces pombe (strain 972 / ATCC 24843) (Fission yeast).